The sequence spans 737 residues: Tripartite terminase subunit 3 (737 aa).

Positions 188-194 (VKKRARI) match the Nuclear localization signal motif. A Walker A motif motif is present at residues 263 to 270 (VPRRHGKT). Positions 357-362 (LLFVDE) match the Walker B motif motif. The active-site For ATPase activity is the glutamate 362. Residues aspartate 517, glutamate 589, and aspartate 712 each act as for nuclease activity in the active site.

The protein belongs to the herpesviridae TRM3 protein family. In terms of assembly, interacts with the terminase subunits TRM1 and TRM2. Interacts with portal protein.

Its subcellular location is the host nucleus. In terms of biological role, component of the molecular motor that translocates viral genomic DNA in empty capsid during DNA packaging. Forms a tripartite terminase complex together with TRM1 and TRM2 in the host cytoplasm. Once the complex reaches the host nucleus, it interacts with the capsid portal vertex. This portal forms a ring in which genomic DNA is translocated into the capsid. TRM3 carries an RNase H-like nuclease activity that plays an important role for the cleavage of concatemeric viral DNA into unit length genomes. The protein is Tripartite terminase subunit 3 of Gallus gallus (Chicken).